A 166-amino-acid polypeptide reads, in one-letter code: Protein-export protein SecB (166 aa).

The protein belongs to the SecB family. Homotetramer, a dimer of dimers. One homotetramer interacts with 1 SecA dimer.

Its subcellular location is the cytoplasm. In terms of biological role, one of the proteins required for the normal export of preproteins out of the cell cytoplasm. It is a molecular chaperone that binds to a subset of precursor proteins, maintaining them in a translocation-competent state. It also specifically binds to its receptor SecA. The polypeptide is Protein-export protein SecB (Roseobacter denitrificans (strain ATCC 33942 / OCh 114) (Erythrobacter sp. (strain OCh 114))).